The chain runs to 279 residues: Ribonuclease Z (279 aa).

Zn(2+) contacts are provided by His64, His66, Asp68, His69, His134, Asp191, and His245. The Proton acceptor role is filled by Asp68.

This sequence belongs to the RNase Z family. Homodimer. The cofactor is Zn(2+).

It carries out the reaction Endonucleolytic cleavage of RNA, removing extra 3' nucleotides from tRNA precursor, generating 3' termini of tRNAs. A 3'-hydroxy group is left at the tRNA terminus and a 5'-phosphoryl group is left at the trailer molecule.. Its function is as follows. Zinc phosphodiesterase, which displays some tRNA 3'-processing endonuclease activity. Probably involved in tRNA maturation, by removing a 3'-trailer from precursor tRNA. This Methanopyrus kandleri (strain AV19 / DSM 6324 / JCM 9639 / NBRC 100938) protein is Ribonuclease Z.